The chain runs to 44 residues: Large ribosomal subunit protein bL34 (44 aa).

The protein belongs to the bacterial ribosomal protein bL34 family.

The polypeptide is Large ribosomal subunit protein bL34 (Wolbachia sp. subsp. Brugia malayi (strain TRS)).